Reading from the N-terminus, the 776-residue chain is Semaphorin-4F (776 aa).

Residues 1 to 39 form the signal peptide; it reads MLARAERPRPGPRPPPVFPFPPPLSLLLLLAILSAPVCG. Residues 40-665 are Extracellular-facing; that stretch reads RVPRSVPRTS…GPSNRAHTVV (626 aa). In terms of domain architecture, Sema spans 47 to 515; the sequence is RTSLPISEAD…SHTEVTQVNT (469 aa). The N-linked (GlcNAc...) asparagine glycan is linked to asparagine 69. A disulfide bridge links cysteine 117 with cysteine 127. N-linked (GlcNAc...) asparagine glycosylation occurs at asparagine 138. Cystine bridges form between cysteine 145–cysteine 154, cysteine 278–cysteine 389, and cysteine 302–cysteine 348. Asparagine 514 is a glycosylation site (N-linked (GlcNAc...) asparagine). The PSI domain occupies 517-568; it reads NCGRLQSCSECILAQDPVCAWSFRLDACVAHAGEHRGMVQDIESADVSSLCP. 3 disulfides stabilise this stretch: cysteine 518/cysteine 535, cysteine 527/cysteine 544, and cysteine 592/cysteine 633. Residues 585 to 640 enclose the Ig-like C2-type domain; the sequence is VGHVVLPCSPSSAWASCVWHQPSGVTALTPRRDGLEVVVTPGAMGAYACECQEGGA. The helical transmembrane segment at 666-686 threads the bilayer; the sequence is GAGLVGFLLGVLAASLTLLLI. Topologically, residues 687–776 are cytoplasmic; sequence GRRQQRRRQR…PLATCDETSI (90 aa). A disordered region spans residues 702–741; the sequence is DKVGLDLGAPPSGTTSYSQDPPSPSPEDERLPLALGKRGS. Residues serine 724 and serine 726 each carry the phosphoserine modification. Positions 774-776 match the PDZ-binding motif; the sequence is TSI.

Belongs to the semaphorin family. Interacts (via PDZ-binding motif) with DLG4/SAP90 (via PDZ domain 2); this interaction may promote translocation of DLG4/SAP90 to the membrane. Expressed at low levels in the developing embryo. Expressed at high levels in the lung and adult central nervous system, including the dorsal root ganglia.

The protein resides in the cell membrane. Its subcellular location is the postsynaptic density. It localises to the perikaryon. It is found in the cell projection. The protein localises to the dendrite. In terms of biological role, probable cell surface receptor that regulates oligodendroglial precursor cell migration. Might also regulate differentiation of oligodendroglial precursor cells. Has growth cone collapse activity against retinal ganglion-cell axons. The chain is Semaphorin-4F (Sema4f) from Rattus norvegicus (Rat).